The primary structure comprises 677 residues: Methionine--tRNA ligase (677 aa).

Positions 15 to 25 match the 'HIGH' region motif; the sequence is PYANGPIHIGH. Zn(2+)-binding residues include cysteine 146, cysteine 149, cysteine 159, and cysteine 162. The 'KMSKS' region motif lies at 332–336; that stretch reads KMSKS. Residue lysine 335 coordinates ATP. In terms of domain architecture, tRNA-binding spans 576–677; it reads DFAKVDLRVA…DGAKPGMRIM (102 aa).

This sequence belongs to the class-I aminoacyl-tRNA synthetase family. MetG type 1 subfamily. Homodimer. Zn(2+) serves as cofactor.

It localises to the cytoplasm. It catalyses the reaction tRNA(Met) + L-methionine + ATP = L-methionyl-tRNA(Met) + AMP + diphosphate. Functionally, is required not only for elongation of protein synthesis but also for the initiation of all mRNA translation through initiator tRNA(fMet) aminoacylation. The polypeptide is Methionine--tRNA ligase (Idiomarina loihiensis (strain ATCC BAA-735 / DSM 15497 / L2-TR)).